The following is a 312-amino-acid chain: Very-long-chain 3-oxoacyl-CoA reductase (312 aa).

3 helical membrane passes run 33–53 (VWGI…WAVV), 181–201 (GVIL…LTLY), and 274–294 (HAFM…NLLM). NADP(+) is bound at residue 48-77 (GAWAVVTGATDGIGKAYAKELAKRGMKVAL). Ser188 contacts substrate. Tyr201 serves as the catalytic Proton acceptor.

It belongs to the short-chain dehydrogenases/reductases (SDR) family. 17-beta-HSD 3 subfamily. Brain.

Its subcellular location is the endoplasmic reticulum membrane. It carries out the reaction a very-long-chain (3R)-3-hydroxyacyl-CoA + NADP(+) = a very-long-chain 3-oxoacyl-CoA + NADPH + H(+). The enzyme catalyses 17beta-estradiol + NAD(+) = estrone + NADH + H(+). It catalyses the reaction 17beta-estradiol + NADP(+) = estrone + NADPH + H(+). The catalysed reaction is 3-oxooctadecanoyl-CoA + NADPH + H(+) = (3R)-hydroxyoctadecanoyl-CoA + NADP(+). It carries out the reaction (7Z,10Z,13Z,16Z)-3-oxodocosatetraenoyl-CoA + NADPH + H(+) = (3R)-hydroxy-(7Z,10Z,13Z,16Z)-docosatetraenoyl-CoA + NADP(+). The enzyme catalyses 3-oxo-(7Z,10Z,13Z,16Z,19Z)-docosapentaenoyl-CoA + NADPH + H(+) = (3R)-hydroxy-(7Z,10Z,13Z,16Z,19Z)-docosapentaenoyl-CoA + NADP(+). It catalyses the reaction (8Z,11Z,14Z)-3-oxoeicosatrienoyl-CoA + NADPH + H(+) = (3R)-hydroxy-(8Z,11Z,14Z)-eicosatrienoyl-CoA + NADP(+). It participates in lipid metabolism; fatty acid biosynthesis. It functions in the pathway steroid biosynthesis; estrogen biosynthesis. Functionally, catalyzes the second of the four reactions of the long-chain fatty acids elongation cycle. This endoplasmic reticulum-bound enzymatic process, allows the addition of two carbons to the chain of long- and very long-chain fatty acids/VLCFAs per cycle. This enzyme has a 3-ketoacyl-CoA reductase activity, reducing 3-ketoacyl-CoA to 3-hydroxyacyl-CoA, within each cycle of fatty acid elongation. Thereby, it may participate in the production of VLCFAs of different chain lengths that are involved in multiple biological processes as precursors of membrane lipids and lipid mediators. May also catalyze the transformation of estrone (E1) into estradiol (E2) and play a role in estrogen formation. The polypeptide is Very-long-chain 3-oxoacyl-CoA reductase (HSD17B12) (Anas platyrhynchos (Mallard)).